The sequence spans 475 residues: tRNA-2-methylthio-N(6)-dimethylallyladenosine synthase (475 aa).

The span at 1 to 10 (MQETTVKRDG) shows a compositional bias: basic and acidic residues. Residues 1 to 22 (MQETTVKRDGASPSDAGTPATT) form a disordered region. In terms of domain architecture, MTTase N-terminal spans 27–144 (GKLYIRTFGC…LPDLIKRRRA (118 aa)). C36, C73, C107, C181, C185, and C188 together coordinate [4Fe-4S] cluster. One can recognise a Radical SAM core domain in the interval 167–400 (RVDGATAFVS…QALINQQAAA (234 aa)). In terms of domain architecture, TRAM spans 403 to 466 (QGMIGTRQRV…TNSLRGRVAG (64 aa)).

It belongs to the methylthiotransferase family. MiaB subfamily. Monomer. [4Fe-4S] cluster serves as cofactor.

It localises to the cytoplasm. The catalysed reaction is N(6)-dimethylallyladenosine(37) in tRNA + (sulfur carrier)-SH + AH2 + 2 S-adenosyl-L-methionine = 2-methylsulfanyl-N(6)-dimethylallyladenosine(37) in tRNA + (sulfur carrier)-H + 5'-deoxyadenosine + L-methionine + A + S-adenosyl-L-homocysteine + 2 H(+). Functionally, catalyzes the methylthiolation of N6-(dimethylallyl)adenosine (i(6)A), leading to the formation of 2-methylthio-N6-(dimethylallyl)adenosine (ms(2)i(6)A) at position 37 in tRNAs that read codons beginning with uridine. The chain is tRNA-2-methylthio-N(6)-dimethylallyladenosine synthase from Bordetella bronchiseptica (strain ATCC BAA-588 / NCTC 13252 / RB50) (Alcaligenes bronchisepticus).